A 218-amino-acid polypeptide reads, in one-letter code: Small ribosomal subunit protein uS3c (218 aa).

The KH type-2 domain maps to 47-118; it reads VQKNIRISSG…KLNIAITRIS (72 aa).

It belongs to the universal ribosomal protein uS3 family. As to quaternary structure, part of the 30S ribosomal subunit.

It localises to the plastid. The protein localises to the chloroplast. The sequence is that of Small ribosomal subunit protein uS3c (rps3) from Barbarea verna (Land cress).